A 165-amino-acid chain; its full sequence is Pro-MCH (165 aa).

The first 21 residues, 1–21, serve as a signal peptide directing secretion; that stretch reads MAKMTLSSYMLMLAFSLFSQG. The interval 66-89 is disordered; sequence YKNDESGFMNDDDNKNSKNTGSKQ. Position 143 is an isoleucine amide (I143). C153 and C162 are oxidised to a cystine.

The protein belongs to the MCH family. In terms of processing, pro-MCH is processed differentially in the brain and in peripheral organs producing two neuropeptides; NEI and MCH. A third peptide, NGE, may also be produced. Preferential processing in neurons by prohormone convertase 2 (PC2) generates NEI. MCH is generated in neurons of the lateral hypothalmic area by several prohormone convertases including PC1/3, PC2 and PC5/6. In terms of tissue distribution, predominantly expressed in hypothalamus. Also found in heart, intestine, spleen and testis (spermatogonia, early spermatocytes and Sertoli cells). In brain only mature MCH and NEI peptides are present. In peripheral tissues a large product, encompassing the NEI and MCH domains of the precursor, is found predominantly.

Its subcellular location is the secreted. In terms of biological role, MCH may act as a neurotransmitter or neuromodulator in a broad array of neuronal functions directed toward the regulation of goal-directed behavior, such as food intake, and general arousal. The chain is Pro-MCH (Pmch) from Mus musculus (Mouse).